A 1001-amino-acid chain; its full sequence is MNGLKMLLFSTTLLTAFTLHAQVTLKQQVKITDEGLHFDGRNLDFSNVGTPDTGEKYDFFFGPNISAHGDAVKTYKHYVFMTWYKGGKSERNVMLSRYNTLSGELSTIEFPHRHTGFRGDPLVGESHNTIGLSVSPINGTIHMVFDMHAYDNNNHDGKFKDDFFRYSYSIAGAAELPHSEFTLDKFVKDTSEVSQGENDYKHLTMTGDLSDKGNFARLTYPKFFTTVDGTLLLYMRLGGNNNGAYVFNRYDAETETWSTFTKFNENNQKLKGNPYNWGLYGNMKYVNGKLRVGFQQRSNDNSDKYKYQNGVYYAYSDHPDGFGDWKNHKGEPMTWPLINSDEIKVFEPGDYVSHTDANSVYIVGSFDWTVTEKGDIHIISKVRSTDRSRPDYEEVYIHSYKPAGAEDFIISTDFTGASEIYTSGDNVYIVGLEGGRPYVEKAQGGTNNFVRVYEASDGPTFDHGTLYIKDGKVYYYLMERTSGNAMPLYLQIIDLDLDLESDANAPIVSFPSPSLTVEQGFEKLSLNIAAESPVEVRTIQSVTLYINDELVRTDTSLPYLFGHGSKPHETGAMGWLDTHEPNPSPLPAGRHIFKAVAVDSEGDSSVATMMLTVNSNAPIISFPQESLEVDEGFEKLSLNISAESAVEGRTIESVSLYIDGEFVRTDTSLPYLFGHASKPHETGAMGWLDTHSPNPSPLTSGTYEFTAVAIDSEGEESTATMQLVVKGEPEPPVVTWPNSTVTVYEGYEKLAITIDAESPVEGRDIQSVTLYRNGELVRVDTRPVWNFGHSHAPYEFGAMGWLDRHDPNPAPLSVGTHTFTAVARDSAGLETESDMTLIVLSLPGPSVMINESDISLLTEYQNLSITADASTANDDTSLVSLALYIDDQLVREIYEPPFEWGADGYSNELLELSEGSHLARVVATDSNNKQSESSIFINIDLLGDLNKDSVVDKGDTRLFTAKLRAGETMDIRYDFNGDGVVNNRDTRGLIRRCTYSRCTSN.

An N-terminal signal peptide occupies residues 1-21; that stretch reads MNGLKMLLFSTTLLTAFTLHA. 126–127 is a substrate binding site; that stretch reads SH. The Proton donor/acceptor role is filled by His127. Ca(2+) contacts are provided by Asp189, Asp199, and Lys201. Tyr280 and Arg297 together coordinate substrate. Positions 300, 303, and 305 each coordinate Ca(2+). Tyr361 is a substrate binding site.

Belongs to the polysaccharide lyase 24 family.

Its function is as follows. Ulvan lyase involved in ulvan degradation. Ulvan is the main polysaccharide component of the Ulvales (green seaweed) cell wall. It is composed of disaccharide building blocks comprising 3-sulfated rhamnose (Rha3S) linked to D-glucuronic acid (GlcA), L-iduronic acid (IduA), or D-xylose (Xyl). Ulvan lyase catalyzes preferentially the endolytic cleavage of the glycosidic bond between Rha3S and the uronic acid GlcA, but not IduA, producing oligosaccharides that have unsaturated 4-deoxy-L-threo-hex-4-enopyranosiduronic acid (deltaUA) at the non-reducing end. The most abundant end products in the degradation of the ulvan polysaccharide were deltaUA-Rha3S disaccharides and deltaUA-Rha3S-IduA-Rha3S and deltaUA-Rha3S-Xyl-Rha3S tetrasaccharides. This is Ulvan lyase, long isoform from Pseudoalteromonas sp. (strain PLSV).